The chain runs to 409 residues: Pectin acetylesterase 4 (409 aa).

Positions 1–32 (MVIRSLLQCRTWSKSDWLLASIGIVLIVYSFS) are cleaved as a signal peptide. 2 N-linked (GlcNAc...) asparagine glycosylation sites follow: asparagine 36 and asparagine 163. Active-site charge relay system residues include serine 199, aspartate 295, and histidine 362. Asparagine 379 and asparagine 406 each carry an N-linked (GlcNAc...) asparagine glycan.

This sequence belongs to the pectinacetylesterase family.

It is found in the secreted. The protein resides in the cell wall. In terms of biological role, hydrolyzes acetyl esters in homogalacturonan regions of pectin. In type I primary cell wall, galacturonic acid residues of pectin can be acetylated at the O-2 and O-3 positions. Decreasing the degree of acetylation of pectin gels in vitro alters their physical properties. The sequence is that of Pectin acetylesterase 4 from Arabidopsis thaliana (Mouse-ear cress).